A 201-amino-acid chain; its full sequence is Increased recombination centers protein 21 (201 aa).

In terms of domain architecture, Cytochrome b5 heme-binding spans 122 to 200 (PLRINRKIVK…LQVCFIGVVC (79 aa)). The heme site is built by histidine 158 and histidine 182.

This sequence belongs to the cytochrome b5 family.

Involved in resistance to carboplatin and cisplatin. Is probably involved in a pathway contributing to genomic integrity. The chain is Increased recombination centers protein 21 (IRC21) from Saccharomyces cerevisiae (strain ATCC 204508 / S288c) (Baker's yeast).